The primary structure comprises 102 residues: Co-chaperonin GroES (102 aa).

It belongs to the GroES chaperonin family. As to quaternary structure, heptamer of 7 subunits arranged in a ring. Interacts with the chaperonin GroEL.

It is found in the cytoplasm. Together with the chaperonin GroEL, plays an essential role in assisting protein folding. The GroEL-GroES system forms a nano-cage that allows encapsulation of the non-native substrate proteins and provides a physical environment optimized to promote and accelerate protein folding. GroES binds to the apical surface of the GroEL ring, thereby capping the opening of the GroEL channel. This Streptomyces coelicolor (strain ATCC BAA-471 / A3(2) / M145) protein is Co-chaperonin GroES.